We begin with the raw amino-acid sequence, 226 residues long: Brain acid soluble protein 1 (226 aa).

The segment covering 1 to 11 (MGGKLSKKKKG) has biased composition (basic residues). The tract at residues 1-226 (MGGKLSKKKK…SSEQSVAVKE (226 aa)) is disordered. Gly2 carries the N-myristoyl glycine lipid modification. A compositionally biased stretch (basic and acidic residues) spans 15 to 27 (NDEKAKDKDKKAE). Lys25 is covalently cross-linked (Glycyl lysine isopeptide (Lys-Gly) (interchain with G-Cter in SUMO2)). Thr31 and Thr36 each carry phosphothreonine. Ser40 carries the post-translational modification Phosphoserine. Residues 49–94 (TEVKESTEEKPKDAADGEAKAEEKEADKAAAAKEEAPKAEPEKSEG) are compositionally biased toward basic and acidic residues. Residue Lys86 forms a Glycyl lysine isopeptide (Lys-Gly) (interchain with G-Cter in SUMO2) linkage. Phosphoserine occurs at positions 92, 128, and 131. 2 stretches are compositionally biased toward low complexity: residues 106–140 (PEQE…GAAP) and 150–226 (APAA…AVKE). Lys159 participates in a covalent cross-link: Glycyl lysine isopeptide (Lys-Gly) (interchain with G-Cter in SUMO2). Ser160, Ser167, Ser169, Ser173, Ser192, and Ser218 each carry phosphoserine.

The protein belongs to the BASP1 family.

The protein localises to the cell membrane. It is found in the cell projection. The protein resides in the growth cone. The chain is Brain acid soluble protein 1 (Basp1) from Mus musculus (Mouse).